We begin with the raw amino-acid sequence, 514 residues long: Pleiotropic regulator 1 (514 aa).

Methionine 1 bears the N-acetylmethionine mark. At serine 119 the chain carries Phosphoserine. The tract at residues 135–160 is disordered; it reads KADANRTAPSGSEYRHPGASDRPQPT. Serine 201 is subject to Phosphoserine. WD repeat units follow at residues 202–241, 244–283, 286–325, 328–367, 370–410, 411–449, and 460–499; these read GHLG…LKLS, GHIS…VIRH, GHLS…SVHT, GHTN…TRVT, NHKK…QNLS, GHNA…NFQR, and DSES…TEET. A Phosphoserine modification is found at serine 391.

Belongs to the WD repeat PRL1/PRL2 family. Identified in the spliceosome C complex. Component of the PRP19-CDC5L splicing complex composed of a core complex comprising a homotetramer of PRPF19, CDC5L, PLRG1 and BCAS2, and at least three less stably associated proteins CTNNBL1, CWC15 and HSPA8. Interacts (via its WD40 repeat domain) directly with CDC5L (via its C-terminal); the interaction is required for mRNA splicing but not for spliceosome assembly. Component of the minor spliceosome, which splices U12-type introns. Within this complex, interacts with CRIPT. Also interacts directly in the complex with BCAS2 and PRPF19. Interacts with USB1.

The protein localises to the nucleus. It localises to the nucleus speckle. Its function is as follows. Involved in pre-mRNA splicing as component of the spliceosome. Component of the PRP19-CDC5L complex that forms an integral part of the spliceosome and is required for activating pre-mRNA splicing. As a component of the minor spliceosome, involved in the splicing of U12-type introns in pre-mRNAs. The chain is Pleiotropic regulator 1 (PLRG1) from Homo sapiens (Human).